The sequence spans 1153 residues: Tyrosine-protein kinase JAK1 (1153 aa).

The FERM domain occupies 32-416; that stretch reads KGLEIHFYLA…GYFRLTVDAH (385 aa). Positions 435–540 constitute an SH2; atypical domain; the sequence is GCHGPICTEY…NLRFQLRRCC (106 aa). Protein kinase domains are found at residues 580 to 846 and 872 to 1150; these read IVQG…DIVM and LKKI…QQML. ATP-binding positions include 878–886 and K905; that span reads LGEGHFGKV. Catalysis depends on D1000, which acts as the Proton acceptor. Phosphotyrosine; by autocatalysis occurs at positions 1031 and 1032.

Belongs to the protein kinase superfamily. Tyr protein kinase family. JAK subfamily. The cofactor is Mg(2+).

The protein localises to the endomembrane system. The enzyme catalyses L-tyrosyl-[protein] + ATP = O-phospho-L-tyrosyl-[protein] + ADP + H(+). Functionally, tyrosine kinase of the non-receptor type, involved in the IFN-alpha/beta/gamma signal pathway. Appears to be required in early development for specific cell migrations (epiboly), expression of homeobox protein goosecoid and formation of anterior structures. The sequence is that of Tyrosine-protein kinase JAK1 (jak1) from Danio rerio (Zebrafish).